Consider the following 519-residue polypeptide: T-box transcription factor TBX5 (519 aa).

Residues 1–46 (MADTEEAYGMPDTPVEAEPKELQCEPKQDNQLGASSKTPTSPPAAF) form a disordered region. Positions 17 to 28 (AEPKELQCEPKQ) are enriched in basic and acidic residues. Residues 29–39 (DNQLGASSKTP) are compositionally biased toward polar residues. The T-box DNA-binding region spans 63–238 (LWLKFHEVGT…NNPFAKGFRG (176 aa)). Disordered regions lie at residues 254–282 (EYPV…RNIT), 293–312 (CENG…SAYT), and 326–372 (KRKV…TSFR). The segment covering 262–282 (TVRQKVSSNHSPFSQETRNIT) has biased composition (polar residues). Over residues 298-309 (SSTSQDLLPSSS) the composition is skewed to low complexity. The span at 328–342 (KVSEEPAEHSYKKPY) shows a compositional bias: basic and acidic residues.

As to quaternary structure, monomer. Homodimer (via the T-box); binds DNA as homodimer.

It is found in the nucleus. The protein resides in the cytoplasm. DNA-binding protein that regulates the transcription of several genes and is involved in heart development and limb pattern formation. May bind to the core DNA motif of promoters. The polypeptide is T-box transcription factor TBX5 (tbx5) (Xenopus laevis (African clawed frog)).